The sequence spans 199 residues: Golgi to ER traffic protein 1 (199 aa).

Residues 1–11 (MLLPDLHPYTI) lie on the Lumenal side of the membrane. A helical transmembrane segment spans residues 12 to 31 (LLSIFLVLVVKQLVATIGKS). The Cytoplasmic segment spans residues 32–115 (TIQEFVWLVY…SIDKASNALI (84 aa)). A coiled-coil region spans residues 76-116 (YAKWTKLNRQADKLSAELQKLNQEIQQQKSSIDKASNALIL). The chain crosses the membrane as a helical span at residues 116–136 (LVLTTLPIWIARVFYRKTHLF). Over 137 to 160 (YIRQGIFPKYVEWVLALPFLPNGA) the chain is Lumenal. A helical transmembrane segment spans residues 161–177 (VGLTIWMFAVNSVVSNF). Topologically, residues 178 to 199 (SFLVSFPFAKRVSKPVRDTKVE) are cytoplasmic.

This sequence belongs to the WRB/GET1 family. In terms of assembly, component of the Golgi to ER traffic (GET) complex, which is composed of GET1, GET2 and GET3. Within the complex, GET1 and GET2 form a heterotetramer which is stabilized by phosphatidylinositol binding and which binds to the GET3 homodimer.

It localises to the endoplasmic reticulum membrane. Its subcellular location is the golgi apparatus membrane. Its function is as follows. Required for the post-translational delivery of tail-anchored (TA) proteins to the endoplasmic reticulum. Together with GET2, acts as a membrane receptor for soluble GET3, which recognizes and selectively binds the transmembrane domain of TA proteins in the cytosol. The GET complex cooperates with the HDEL receptor ERD2 to mediate the ATP-dependent retrieval of resident ER proteins that contain a C-terminal H-D-E-L retention signal from the Golgi to the ER. In Candida albicans (strain WO-1) (Yeast), this protein is Golgi to ER traffic protein 1.